The following is a 92-amino-acid chain: Movement protein (92 aa).

The helical transmembrane segment at 38-58 (VIALVVILVSVGVFYLAYTLF) threads the bilayer.

It belongs to the mastrevirus movement protein family. In terms of assembly, interacts with the capsid protein (CP). Part of a MP-CP-viral DNA complex.

The protein localises to the host membrane. Involved in the viral transport within, and between cells. This Phaseolus vulgaris (Kidney bean) protein is Movement protein.